Here is a 503-residue protein sequence, read N- to C-terminus: Endoglycoceramidase (503 aa).

Residues 1 to 21 form the signal peptide; sequence MAETQPLVFVLMSISAILTAG. N-linked (GlcNAc...) asparagine glycans are attached at residues N72, N108, and N205. Residue E239 is the Proton donor of the active site. N-linked (GlcNAc...) asparagine glycans are attached at residues N307, N409, and N485.

It belongs to the glycosyl hydrolase 5 (cellulase A) family.

It localises to the secreted. It is found in the nematocyst. It catalyses the reaction an oligoglycosyl-(1-&gt;4)-beta-D-glucosyl-(1&lt;-&gt;1)-ceramide + H2O = an oligoglycosyl-(1-&gt;4)-D-glucose + an N-acyl-sphingoid base. Its activity is regulated as follows. Completely inhibited by Hg(2+). Cu(2+) and zinc have no effect on enzyme activity. Lithium, potassium, manganese, Ni(2+), calcium, magnesium and EDTA have no significant effect on enzyme activity. Enzyme requires presence of detergents such as Triton X-100 and Lubrol PX for the hydrolysis of glycosphingolipids. Taurodeoxycholate strongly inhibits the enzyme activity and SDS completely inhibits the enzyme activity. Functionally, hydrolysis of the glycosidic linkage between oligosaccharides and ceramides of glycosphingolipids, especially b-series polysialogangliosides. This Cyanea nozakii (Jellyfish) protein is Endoglycoceramidase.